The primary structure comprises 463 residues: L-seryl-tRNA(Sec) selenium transferase (463 aa).

Position 295 is an N6-(pyridoxal phosphate)lysine (K295).

It belongs to the SelA family. Homodecamer; pentamer of dimers. Binds only one seryl-tRNA(Sec) per dimer. Pyridoxal 5'-phosphate is required as a cofactor.

Its subcellular location is the cytoplasm. The enzyme catalyses L-seryl-tRNA(Sec) + selenophosphate + H(+) = L-selenocysteinyl-tRNA(Sec) + phosphate. It functions in the pathway aminoacyl-tRNA biosynthesis; selenocysteinyl-tRNA(Sec) biosynthesis; selenocysteinyl-tRNA(Sec) from L-seryl-tRNA(Sec) (bacterial route): step 1/1. Functionally, converts seryl-tRNA(Sec) to selenocysteinyl-tRNA(Sec) required for selenoprotein biosynthesis. This Escherichia coli O139:H28 (strain E24377A / ETEC) protein is L-seryl-tRNA(Sec) selenium transferase.